Consider the following 902-residue polypeptide: Serine/threonine-protein kinase cbk1 (902 aa).

Disordered stretches follow at residues 1–22 (MSED…TCLK), 97–154 (ETHS…REDA), and 207–288 (QRMM…MVSP). Positions 97–118 (ETHSHSSDAEGTSHQDVSDRRN) are enriched in basic and acidic residues. A compositionally biased stretch (polar residues) spans 125-134 (RPSSHSQADS). Composition is skewed to basic and acidic residues over residues 142–154 (QQKE…REDA) and 210–221 (MLDRGNPKRERS). A compositionally biased stretch (low complexity) spans 222–239 (SGSSTPSSKSSPVDSVST). The span at 240-259 (APTSVSPGSLAPSGSTNNDP) shows a compositional bias: polar residues. Residues 264–274 (KHIDSQADLPE) show a composition bias toward basic and acidic residues. A Protein kinase domain is found at 378–732 (FEPLKILGRG…SPKYKQNDAI (355 aa)). ATP-binding positions include 384–392 (LGRGSFGVV) and Lys-432. Asp-527 serves as the catalytic Proton acceptor. Positions 771 to 831 (RGINWEQIHR…KWHPLGGKGG (61 aa)) constitute an AGC-kinase C-terminal domain. Residues 797 to 806 (YFDDGEHPSD) show a composition bias toward basic and acidic residues. A disordered region spans residues 797–875 (YFDDGEHPSD…KKRLKEAKRA (79 aa)). Residues 807–818 (REDDSSDSELDG) show a composition bias toward acidic residues. Basic and acidic residues predominate over residues 833 to 843 (HKPDKPLKADV).

Belongs to the protein kinase superfamily. STE Ser/Thr protein kinase family. COT1 subfamily.

The catalysed reaction is L-seryl-[protein] + ATP = O-phospho-L-seryl-[protein] + ADP + H(+). The enzyme catalyses L-threonyl-[protein] + ATP = O-phospho-L-threonyl-[protein] + ADP + H(+). Its function is as follows. Protein kinase that seems to play a role in the regulation of cell morphogenesis and proliferation. In Emericella nidulans (strain FGSC A4 / ATCC 38163 / CBS 112.46 / NRRL 194 / M139) (Aspergillus nidulans), this protein is Serine/threonine-protein kinase cbk1 (cbk1).